The primary structure comprises 118 residues: Large ribosomal subunit protein bL20 (118 aa).

The protein belongs to the bacterial ribosomal protein bL20 family.

In terms of biological role, binds directly to 23S ribosomal RNA and is necessary for the in vitro assembly process of the 50S ribosomal subunit. It is not involved in the protein synthesizing functions of that subunit. The polypeptide is Large ribosomal subunit protein bL20 (rplT) (Thermotoga maritima (strain ATCC 43589 / DSM 3109 / JCM 10099 / NBRC 100826 / MSB8)).